The following is a 397-amino-acid chain: Elongation factor Tu 2 (397 aa).

The 197-residue stretch at 10-206 folds into the tr-type G domain; the sequence is KPHVNIGTIG…AIDTWIPEPV (197 aa). Positions 19-26 are G1; sequence GHVDHGKT. Position 19–26 (19–26) interacts with GTP; it reads GHVDHGKT. A Mg(2+)-binding site is contributed by Thr-26. The tract at residues 61–65 is G2; sequence GITIS. A G3 region spans residues 82 to 85; that stretch reads DCPG. Residues 82 to 86 and 137 to 140 contribute to the GTP site; these read DCPGH and NKCD. A G4 region spans residues 137–140; the sequence is NKCD. A G5 region spans residues 175–177; the sequence is SAL.

It belongs to the TRAFAC class translation factor GTPase superfamily. Classic translation factor GTPase family. EF-Tu/EF-1A subfamily. Monomer.

The protein localises to the cytoplasm. It catalyses the reaction GTP + H2O = GDP + phosphate + H(+). GTP hydrolase that promotes the GTP-dependent binding of aminoacyl-tRNA to the A-site of ribosomes during protein biosynthesis. This Alkaliphilus metalliredigens (strain QYMF) protein is Elongation factor Tu 2.